Reading from the N-terminus, the 541-residue chain is Glucose-6-phosphate isomerase (541 aa).

Residue Glu347 is the Proton donor of the active site. Active-site residues include His378 and Lys506.

Belongs to the GPI family.

The protein localises to the cytoplasm. The catalysed reaction is alpha-D-glucose 6-phosphate = beta-D-fructose 6-phosphate. It participates in carbohydrate biosynthesis; gluconeogenesis. It functions in the pathway carbohydrate degradation; glycolysis; D-glyceraldehyde 3-phosphate and glycerone phosphate from D-glucose: step 2/4. Its function is as follows. Catalyzes the reversible isomerization of glucose-6-phosphate to fructose-6-phosphate. This Francisella tularensis subsp. holarctica (strain OSU18) protein is Glucose-6-phosphate isomerase.